Reading from the N-terminus, the 735-residue chain is Protein STRUBBELIG-RECEPTOR FAMILY 2 (735 aa).

The N-terminal stretch at 1 to 23 (MKTKQQLRFLATILLTTILFVLA) is a signal peptide. The Extracellular segment spans residues 24 to 297 (KTDTDPLEVL…KKKKKGIGAG (274 aa)). LRR repeat units lie at residues 78-94 (LRELKLLGSLGNQLQHL), 96-119 (NLKILDVSFNNLEGEIPFGLPPNA), 120-140 (THINMAYNNLTQSIPFSLPLM), 142-163 (SLQSLNLSHNSLSGPLGNVFSG), 165-187 (QIKEMDLSFNNLTGDLPSSFGTL), 189-211 (NLTSLYLQNNRLTGSVIYLADLP), 212-232 (LADLNIEDNQFSGIIPSHFQS), and 233-253 (IPHLWIWGNKFHVEPNYKPWK). Residues N118, N128, N147, N175, and N189 are each glycosylated (N-linked (GlcNAc...) asparagine). An N-linked (GlcNAc...) asparagine glycan is attached at N264. A helical membrane pass occupies residues 298 to 318 (STFLLVGGLALLGTFFALFAV). The Cytoplasmic segment spans residues 319-735 (RMNHRRAQNL…SSPTFSYLSS (417 aa)). The segment at 358–378 (PQIKRFQPPPAPQLRHLPSPP) is disordered. One can recognise a Protein kinase domain in the interval 415-695 (FSEENLLGEG…EIVEALTALI (281 aa)).

Belongs to the protein kinase superfamily. Ser/Thr protein kinase family. As to expression, expressed in seedlings, roots, stems, leaves, flowers and siliques.

Its subcellular location is the membrane. The chain is Protein STRUBBELIG-RECEPTOR FAMILY 2 (SRF2) from Arabidopsis thaliana (Mouse-ear cress).